A 273-amino-acid chain; its full sequence is Putative phosphoenolpyruvate synthase regulatory protein (273 aa).

153–160 (GVSRSGKT) is a binding site for ADP.

The protein belongs to the pyruvate, phosphate/water dikinase regulatory protein family. PSRP subfamily.

It carries out the reaction [pyruvate, water dikinase] + ADP = [pyruvate, water dikinase]-phosphate + AMP + H(+). It catalyses the reaction [pyruvate, water dikinase]-phosphate + phosphate + H(+) = [pyruvate, water dikinase] + diphosphate. Functionally, bifunctional serine/threonine kinase and phosphorylase involved in the regulation of the phosphoenolpyruvate synthase (PEPS) by catalyzing its phosphorylation/dephosphorylation. The sequence is that of Putative phosphoenolpyruvate synthase regulatory protein from Polaromonas naphthalenivorans (strain CJ2).